Here is an 862-residue protein sequence, read N- to C-terminus: Interleukin-12 receptor subunit beta-2 (862 aa).

Residues 1 to 23 form the signal peptide; that stretch reads MAHTFRGCSLAFMFIITWLLIKA. At 24–622 the chain is on the extracellular side; sequence KIDACKRGDV…REFCLQGKAN (599 aa). N-linked (GlcNAc...) asparagine glycosylation is found at asparagine 48, asparagine 129, asparagine 166, asparagine 195, and asparagine 271. 5 Fibronectin type-III domains span residues 126–221, 226–319, 320–419, 423–520, and 521–620; these read QPQN…FLDI, PPWD…TPEE, EPTG…LCEA, APRQ…KHKA, and PLSG…LQGK. The WSXWS motif signature appears at 305-309; that stretch reads WSDWS. Residues asparagine 347, asparagine 376, and asparagine 480 are each glycosylated (N-linked (GlcNAc...) asparagine). The helical transmembrane segment at 623 to 643 threads the bilayer; that stretch reads WMAFVAPSICIAIIMVGIFST. At 644–862 the chain is on the cytoplasmic side; the sequence is HYFQQKVFVL…LKMRCDSLML (219 aa). Positions 662–670 match the Box 1 motif motif; sequence CSREIPDPA. Residues 725-755 are disordered; the sequence is NWPQREKGIQGHQASEKDMMHSASSPPPPRA. Over residues 728–744 the composition is skewed to basic and acidic residues; that stretch reads QREKGIQGHQASEKDMM. Residues 796 to 801 are required for STAT4 binding; sequence THDGYL. A Phosphotyrosine modification is found at tyrosine 800.

It belongs to the type I cytokine receptor family. Type 2 subfamily. Heterodimer/heterooligomer; disulfide-linked. The functional high affinity IL12 receptor is composed of I12RB1 and IL12RB2. Il12RB2 binds JAK2 (via its N-terminal) through a membrane-proximal region of the cytoplasmic domain. Interaction, in vitro and in vivo, with SOCS3 (via its SH2 domain) inhibits the STAT4-mediated activation. Binds STAT4 through a membrane-distal C-terminal region. In terms of processing, on IL12 binding, phosphorylated on C-terminal tyrosine residues by JAK2. Phosphorylation on Tyr-800 is required for STAT4 binding and activation, and for SOCS3 binding. Isoform 2 is expressed at similar levels in both naive and activated T-cells.

The protein resides in the membrane. In terms of biological role, receptor for interleukin-12. This subunit is the signaling component coupling to the JAK2/STAT4 pathway. Promotes the proliferation of T-cells as well as NK cells. Induces the promotion of T-cells towards the Th1 phenotype by strongly enhancing IFN-gamma production. The protein is Interleukin-12 receptor subunit beta-2 (IL12RB2) of Homo sapiens (Human).